The chain runs to 892 residues: Alpha-actinin-1 (892 aa).

The residue at position 1 (methionine 1) is an N-acetylmethionine. The actin-binding stretch occupies residues 1-247 (MDHYDSQQTN…IMTYVSSFYH (247 aa)). Position 6 is a phosphoserine (serine 6). Tyrosine 12 bears the Phosphotyrosine; by FAK1 mark. Calponin-homology (CH) domains lie at 31-135 (KQQR…LRFA) and 144-250 (TSAK…HAFS). N6-acetyllysine is present on residues lysine 95 and lysine 195. Spectrin repeat units follow at residues 274 to 384 (QLME…WLLN), 394 to 499 (HLAE…ALER), 509 to 620 (QLYL…ALTE), and 630 to 733 (RLRK…EVEN). An interaction with DDN region spans residues 274-733 (QLMEDYEKLA…IARTINEVEN (460 aa)). A Phosphoserine modification is found at serine 471. Lysine 676 is subject to N6-acetyllysine. The residue at position 677 (serine 677) is a Phosphoserine. EF-hand domains follow at residues 746-781 (EQMNEFRASFNHFDRDHSGTLGPEEFKACLISLGYD) and 787-822 (QGEAEFARIMSIVDPNRLGVVTFQAFIDFMSRETAD). The Ca(2+) site is built by aspartate 759, aspartate 761, serine 763, threonine 765, and glutamate 770. Residue serine 890 is modified to Phosphoserine.

It belongs to the alpha-actinin family. Homodimer; antiparallel. Interacts with MYOZ2, TTID and LPP. Interacts with DDN. Interacts with PSD. Interacts with MICALL2. Interacts with DNM2 and CTTN. Interacts with PDLIM1. Interacts with PDLIM2. Interacts with PDLIM4 (via PDZ domain). Interacts with IGSF8.

It is found in the cytoplasm. The protein resides in the cytoskeleton. It localises to the myofibril. The protein localises to the sarcomere. Its subcellular location is the z line. It is found in the cell membrane. The protein resides in the cell junction. It localises to the cell projection. The protein localises to the ruffle. Its function is as follows. F-actin cross-linking protein which is thought to anchor actin to a variety of intracellular structures. Association with IGSF8 regulates the immune synapse formation and is required for efficient T-cell activation. This chain is Alpha-actinin-1 (ACTN1), found in Homo sapiens (Human).